The sequence spans 700 residues: Beta-galactosidase BgaB (700 aa).

Positions 122 and 160 each coordinate substrate. The active-site Proton donor is the Glu-161. Glu-320 (nucleophile) is an active-site residue. Residues Trp-328 and 368–371 (EAFH) contribute to the substrate site.

It belongs to the glycosyl hydrolase 42 family. In terms of assembly, trimer. Tetramer. In terms of processing, the N-terminus is blocked.

It catalyses the reaction Hydrolysis of terminal non-reducing beta-D-galactose residues in beta-D-galactosides.. Its activity is regulated as follows. Inhibited by high substrate concentrations (100 mg/ml). No effect on activity with various EDTA concentrations (0-1 mM). 20-fold higher activity when cells grown on TOS than when cells grown on galactose, glucose and lactose. Functionally, involved in the hydrolysis of transgalactooligosaccharides (TOS). Highly active towards Gal(beta1-4)Gal and Gal(beta1-4)-Gal-containing oligosaccharides. Low activity towards Gal(beta1-3)Gal, lactose and Gal(beta1-3)GalOMe. No activity towards Gal(beta1-6)Gal, Gal(beta1-4)Man, Gal(alpha1-4)Gal, Gal(alpha1-3)Gal(beta1-4)Gal, lactulose, 3'fucosyllactose, lacto-N-fucopentaose I, lacto-N-fucopentaose II, cellobiose, maltose or sucrose. No transglycosylation activity is found at high substrate concentrations (100 mg/ml) and only low transglycosylation activity at lower substrate concentrations (10 mg/ml). The sequence is that of Beta-galactosidase BgaB (bgaB) from Bifidobacterium adolescentis (strain ATCC 15703 / DSM 20083 / NCTC 11814 / E194a).